A 513-amino-acid chain; its full sequence is V-type proton ATPase subunit B, kidney isoform (513 aa).

Arg-394 is an ATP binding site. A PDZ-binding motif is present at residues 510 to 513 (DTAL).

The protein belongs to the ATPase alpha/beta chains family. As to quaternary structure, V-ATPase is a heteromultimeric enzyme made up of two complexes: the ATP-hydrolytic V1 complex and the proton translocation V0 complex. The V1 complex consists of three catalytic AB heterodimers that form a heterohexamer, three peripheral stalks each consisting of EG heterodimers, one central rotor including subunits D and F, and the regulatory subunits C and H. The proton translocation complex V0 consists of the proton transport subunit a, a ring of proteolipid subunits c9c'', rotary subunit d, subunits e and f, and the accessory subunits ATP6AP1/Ac45 and ATP6AP2/PRR. Forms a complex with NHERF1 and SCL4A7. As to expression, kidney cortex and medulla.

The protein localises to the apical cell membrane. It localises to the basolateral cell membrane. In terms of biological role, non-catalytic subunit of the V1 complex of vacuolar(H+)-ATPase (V-ATPase), a multisubunit enzyme composed of a peripheral complex (V1) that hydrolyzes ATP and a membrane integral complex (V0) that translocates protons. V-ATPase is responsible for acidifying and maintaining the pH of intracellular compartments and in some cell types, is targeted to the plasma membrane, where it is responsible for acidifying the extracellular environment. Essential for the proper assembly and activity of V-ATPase. In renal intercalated cells, mediates secretion of protons (H+) into the urine thereby ensuring correct urinary acidification. Required for optimal olfactory function by mediating the acidification of the nasal olfactory epithelium. In Bos taurus (Bovine), this protein is V-type proton ATPase subunit B, kidney isoform (ATP6V1B1).